We begin with the raw amino-acid sequence, 212 residues long: Methylthioribulose-1-phosphate dehydratase (212 aa).

Zn(2+)-binding residues include His97 and His99.

It belongs to the aldolase class II family. MtnB subfamily. Homotetramer. It depends on Zn(2+) as a cofactor.

The catalysed reaction is 5-(methylsulfanyl)-D-ribulose 1-phosphate = 5-methylsulfanyl-2,3-dioxopentyl phosphate + H2O. Its pathway is amino-acid biosynthesis; L-methionine biosynthesis via salvage pathway; L-methionine from S-methyl-5-thio-alpha-D-ribose 1-phosphate: step 2/6. Functionally, catalyzes the dehydration of methylthioribulose-1-phosphate (MTRu-1-P) into 2,3-diketo-5-methylthiopentyl-1-phosphate (DK-MTP-1-P). In Bacillus cereus (strain ZK / E33L), this protein is Methylthioribulose-1-phosphate dehydratase.